The sequence spans 153 residues: Putative nuclear shuttle protein (153 aa).

This sequence belongs to the nanoviridae nuclear shuttle protein family.

The protein localises to the host nucleus. It localises to the host cytoplasm. Its function is as follows. Putative nuclear shuttle protein. This chain is Putative nuclear shuttle protein (DNA-N), found in Cicer arietinum (Chickpea).